The primary structure comprises 388 residues: Succinate--CoA ligase [ADP-forming] subunit beta (388 aa).

The 236-residue stretch at 9-244 (KQLFARYGLP…QSQEDPRAAQ (236 aa)) folds into the ATP-grasp domain. ATP is bound by residues K46, 53–55 (GRG), E99, T102, and E107. Positions 199 and 213 each coordinate Mg(2+). Residues N264 and 321–323 (GIV) contribute to the substrate site.

It belongs to the succinate/malate CoA ligase beta subunit family. In terms of assembly, heterotetramer of two alpha and two beta subunits. The cofactor is Mg(2+).

The enzyme catalyses succinate + ATP + CoA = succinyl-CoA + ADP + phosphate. It carries out the reaction GTP + succinate + CoA = succinyl-CoA + GDP + phosphate. It functions in the pathway carbohydrate metabolism; tricarboxylic acid cycle; succinate from succinyl-CoA (ligase route): step 1/1. In terms of biological role, succinyl-CoA synthetase functions in the citric acid cycle (TCA), coupling the hydrolysis of succinyl-CoA to the synthesis of either ATP or GTP and thus represents the only step of substrate-level phosphorylation in the TCA. The beta subunit provides nucleotide specificity of the enzyme and binds the substrate succinate, while the binding sites for coenzyme A and phosphate are found in the alpha subunit. The polypeptide is Succinate--CoA ligase [ADP-forming] subunit beta (Shigella flexneri serotype 5b (strain 8401)).